We begin with the raw amino-acid sequence, 77 residues long: Translation initiation factor IF-1, chloroplastic (77 aa).

The 71-residue stretch at M1 to R71 folds into the S1-like domain.

It belongs to the IF-1 family. In terms of assembly, component of the 30S ribosomal translation pre-initiation complex which assembles on the 30S ribosome in the order IF-2 and IF-3, IF-1 and N-formylmethionyl-tRNA(fMet); mRNA recruitment can occur at any time during PIC assembly.

Its subcellular location is the plastid. It is found in the chloroplast. One of the essential components for the initiation of protein synthesis. Stabilizes the binding of IF-2 and IF-3 on the 30S subunit to which N-formylmethionyl-tRNA(fMet) subsequently binds. Helps modulate mRNA selection, yielding the 30S pre-initiation complex (PIC). Upon addition of the 50S ribosomal subunit IF-1, IF-2 and IF-3 are released leaving the mature 70S translation initiation complex. The sequence is that of Translation initiation factor IF-1, chloroplastic from Garrya elliptica (Wavyleaf silktassel).